A 198-amino-acid chain; its full sequence is HTH-type transcriptional regulator BetI (198 aa).

Residues 8 to 68 (PLRRRELIDA…ATMRHLLREL (61 aa)) form the HTH tetR-type domain. The H-T-H motif DNA-binding region spans 31–50 (TVAQIAHEAGVSPALAHHYF).

The protein operates within amine and polyamine biosynthesis; betaine biosynthesis via choline pathway [regulation]. Repressor involved in the biosynthesis of the osmoprotectant glycine betaine. It represses transcription of the choline transporter BetT and the genes of BetAB involved in the synthesis of glycine betaine. This is HTH-type transcriptional regulator BetI from Brucella abortus (strain 2308).